The chain runs to 220 residues: UPF0319 protein YccT (220 aa).

An N-terminal signal peptide occupies residues 1-20 (MKTGALATFLALCLPVTVFA).

The protein belongs to the UPF0319 family.

This chain is UPF0319 protein YccT, found in Salmonella paratyphi A (strain ATCC 9150 / SARB42).